The primary structure comprises 178 residues: Probable DNA-directed RNA polymerase subunit delta (178 aa).

Positions 14 to 81 (LSMIEVAHAI…GENTWGLRTW (68 aa)) constitute an HTH HARE-type domain. Positions 120 to 143 (DDDVIDYDSDDPEDEEVEAEDTTS) are enriched in acidic residues. A disordered region spans residues 120 to 178 (DDDVIDYDSDDPEDEEVEAEDTTSDDAPAFEDLSNDDDTDVLPDGIEGQLSELNEDDEN).

This sequence belongs to the RpoE family. RNAP is composed of a core of 2 alpha, a beta and a beta' subunits. The core is associated with a delta subunit and one of several sigma factors.

Its function is as follows. Participates in both the initiation and recycling phases of transcription. In the presence of the delta subunit, RNAP displays an increased specificity of transcription, a decreased affinity for nucleic acids, and an increased efficiency of RNA synthesis because of enhanced recycling. This is Probable DNA-directed RNA polymerase subunit delta from Pediococcus pentosaceus (strain ATCC 25745 / CCUG 21536 / LMG 10740 / 183-1w).